Here is a 349-residue protein sequence, read N- to C-terminus: tRNA pseudouridine synthase D (349 aa).

F26 provides a ligand contact to substrate. D79 acts as the Nucleophile in catalysis. N128 contacts substrate. Residues 154–302 (GVPNYFGSQR…VEGSRRAVLL (149 aa)) form the TRUD domain. F328 serves as a coordination point for substrate.

This sequence belongs to the pseudouridine synthase TruD family.

It catalyses the reaction uridine(13) in tRNA = pseudouridine(13) in tRNA. In terms of biological role, responsible for synthesis of pseudouridine from uracil-13 in transfer RNAs. The sequence is that of tRNA pseudouridine synthase D from Yersinia pseudotuberculosis serotype IB (strain PB1/+).